The sequence spans 1026 residues: Multidrug resistance protein MdtC (1026 aa).

11 helical membrane passes run isoleucine 15 to alanine 35, glutamate 333 to leucine 353, leucine 360 to cysteine 380, leucine 387 to leucine 407, valine 431 to leucine 451, phenylalanine 463 to proline 483, leucine 528 to proline 548, leucine 853 to serine 873, leucine 897 to valine 917, proline 953 to glycine 973, and isoleucine 984 to valine 1004.

This sequence belongs to the resistance-nodulation-cell division (RND) (TC 2.A.6) family. MdtC subfamily. Part of a tripartite efflux system composed of MdtA, MdtB and MdtC. MdtC forms a heteromultimer with MdtB.

The protein localises to the cell inner membrane. The chain is Multidrug resistance protein MdtC from Salmonella schwarzengrund (strain CVM19633).